The chain runs to 158 residues: 2-C-methyl-D-erythritol 2,4-cyclodiphosphate synthase (158 aa).

Asp9 and His11 together coordinate a divalent metal cation. Residues 9–11 (DVH) and 35–36 (HS) contribute to the 4-CDP-2-C-methyl-D-erythritol 2-phosphate site. Residue His43 participates in a divalent metal cation binding. 4-CDP-2-C-methyl-D-erythritol 2-phosphate-binding positions include 57-59 (DLG), 62-66 (FPDTD), 133-136 (TTTE), Phe140, and Arg143.

The protein belongs to the IspF family. As to quaternary structure, homotrimer. A divalent metal cation serves as cofactor.

The catalysed reaction is 4-CDP-2-C-methyl-D-erythritol 2-phosphate = 2-C-methyl-D-erythritol 2,4-cyclic diphosphate + CMP. Its pathway is isoprenoid biosynthesis; isopentenyl diphosphate biosynthesis via DXP pathway; isopentenyl diphosphate from 1-deoxy-D-xylulose 5-phosphate: step 4/6. Involved in the biosynthesis of isopentenyl diphosphate (IPP) and dimethylallyl diphosphate (DMAPP), two major building blocks of isoprenoid compounds. Catalyzes the conversion of 4-diphosphocytidyl-2-C-methyl-D-erythritol 2-phosphate (CDP-ME2P) to 2-C-methyl-D-erythritol 2,4-cyclodiphosphate (ME-CPP) with a corresponding release of cytidine 5-monophosphate (CMP). The chain is 2-C-methyl-D-erythritol 2,4-cyclodiphosphate synthase from Desulfitobacterium hafniense (strain DSM 10664 / DCB-2).